We begin with the raw amino-acid sequence, 499 residues long: Cytochrome P450 71A27 (499 aa).

A helical membrane pass occupies residues 3–23 (MILISLCLTTLLAFLFLKPLL). Cys-438 is a binding site for heme.

This sequence belongs to the cytochrome P450 family. It depends on heme as a cofactor.

The protein localises to the membrane. The polypeptide is Cytochrome P450 71A27 (CYP71A27) (Arabidopsis thaliana (Mouse-ear cress)).